The primary structure comprises 140 residues: MEQPTSSTNGEKTKSPCKSNSENDEMQEVPNRVLAPEQSLKKTKTSEYPIIFVYYRRKGKKINSNQLENDQSQENSINPVQKEEDEGLGLSEGSSNEDEDLGPSEGPSKEDKDLDSSEGSSQENEDLGLSEGSSQDSGED.

Polar residues-rich tracts occupy residues 1-20, 62-79, and 131-140; these read MEQP…CKSN, INSN…SINP, and EGSSQDSGED. The tract at residues 1-140 is disordered; it reads MEQPTSSTNG…EGSSQDSGED (140 aa).

It belongs to the SPAN-X family.

The chain is Sperm protein associated with the nucleus on the X chromosome N3 (SPANXN3) from Pan troglodytes (Chimpanzee).